The chain runs to 477 residues: ATP synthase subunit beta (477 aa).

Position 155–162 (155–162 (GGAGVGKT)) interacts with ATP.

The protein belongs to the ATPase alpha/beta chains family. As to quaternary structure, F-type ATPases have 2 components, CF(1) - the catalytic core - and CF(0) - the membrane proton channel. CF(1) has five subunits: alpha(3), beta(3), gamma(1), delta(1), epsilon(1). CF(0) has three main subunits: a(1), b(2) and c(9-12). The alpha and beta chains form an alternating ring which encloses part of the gamma chain. CF(1) is attached to CF(0) by a central stalk formed by the gamma and epsilon chains, while a peripheral stalk is formed by the delta and b chains.

The protein resides in the cell inner membrane. The enzyme catalyses ATP + H2O + 4 H(+)(in) = ADP + phosphate + 5 H(+)(out). Functionally, produces ATP from ADP in the presence of a proton gradient across the membrane. The catalytic sites are hosted primarily by the beta subunits. In Mesorhizobium japonicum (strain LMG 29417 / CECT 9101 / MAFF 303099) (Mesorhizobium loti (strain MAFF 303099)), this protein is ATP synthase subunit beta.